A 617-amino-acid polypeptide reads, in one-letter code: Glutamyl-tRNA(Gln) amidotransferase subunit E (617 aa).

Belongs to the GatB/GatE family. GatE subfamily. Heterodimer of GatD and GatE.

It carries out the reaction L-glutamyl-tRNA(Gln) + L-glutamine + ATP + H2O = L-glutaminyl-tRNA(Gln) + L-glutamate + ADP + phosphate + H(+). Allows the formation of correctly charged Gln-tRNA(Gln) through the transamidation of misacylated Glu-tRNA(Gln) in organisms which lack glutaminyl-tRNA synthetase. The reaction takes place in the presence of glutamine and ATP through an activated gamma-phospho-Glu-tRNA(Gln). The GatDE system is specific for glutamate and does not act on aspartate. This is Glutamyl-tRNA(Gln) amidotransferase subunit E from Natronomonas pharaonis (strain ATCC 35678 / DSM 2160 / CIP 103997 / JCM 8858 / NBRC 14720 / NCIMB 2260 / Gabara) (Halobacterium pharaonis).